The sequence spans 356 residues: Heme A synthase (356 aa).

Transmembrane regions (helical) follow at residues 24 to 44, 106 to 126, 139 to 159, 174 to 194, and 214 to 234; these read IAIW…VGGV, FHRL…VYFM, LLGI…MVMS, AHLG…TGLI, and AWML…VAGI. H276 provides a ligand contact to heme. 3 consecutive transmembrane segments (helical) span residues 278–298, 309–329, and 331–351; these read LIAW…KQLS, LLLL…LLSV, and LTFA…ALWV. Position 337 (H337) interacts with heme.

The protein belongs to the COX15/CtaA family. Type 2 subfamily. In terms of assembly, interacts with CtaB. It depends on heme b as a cofactor.

The protein localises to the cell membrane. It catalyses the reaction Fe(II)-heme o + 2 A + H2O = Fe(II)-heme a + 2 AH2. It participates in porphyrin-containing compound metabolism; heme A biosynthesis; heme A from heme O: step 1/1. Catalyzes the conversion of heme O to heme A by two successive hydroxylations of the methyl group at C8. The first hydroxylation forms heme I, the second hydroxylation results in an unstable dihydroxymethyl group, which spontaneously dehydrates, resulting in the formyl group of heme A. In Nitrosomonas eutropha (strain DSM 101675 / C91 / Nm57), this protein is Heme A synthase.